A 79-amino-acid chain; its full sequence is Small ribosomal subunit protein uS17 (79 aa).

The protein belongs to the universal ribosomal protein uS17 family. As to quaternary structure, part of the 30S ribosomal subunit.

Its function is as follows. One of the primary rRNA binding proteins, it binds specifically to the 5'-end of 16S ribosomal RNA. This is Small ribosomal subunit protein uS17 from Bartonella quintana (strain Toulouse) (Rochalimaea quintana).